A 396-amino-acid polypeptide reads, in one-letter code: Serpin-ZXA (396 aa).

The interval 343 to 367 is RCL; the sequence is GTEAAAATAAVITLRSAPIAEDFVA.

The protein belongs to the serpin family.

Probable serine protease inhibitor. This is Serpin-ZXA from Oryza sativa subsp. japonica (Rice).